The primary structure comprises 277 residues: Collectin-10 (277 aa).

An N-terminal signal peptide occupies residues 1–27 (MNGFRVLLRSNLSMLLLLALLHFQSLG). An N-linked (GlcNAc...) asparagine glycan is attached at Asn-11. The segment at 41 to 103 (THTISPGPKG…IGKKGDKGEK (63 aa)) is disordered. The Collagen-like domain occupies 45–103 (SPGPKGDDGERGDTGEEGKDGKVGRQGPKGVKGELGDMGAQGNIGKSGPIGKKGDKGEK). The span at 49 to 67 (KGDDGERGDTGEEGKDGKV) shows a compositional bias: basic and acidic residues. A C-type lectin domain is found at 155–271 (TEEKFYYIVQ…CHLTMYFVCE (117 aa)). 2 cysteine pairs are disulfide-bonded: Cys-176–Cys-270 and Cys-248–Cys-262. The N-linked (GlcNAc...) asparagine glycan is linked to Asn-258.

It belongs to the COLEC10/COLEC11 family. In terms of tissue distribution, expressed mainly in the liver and stomach, but also in muscles, testes, and intestines.

The protein resides in the secreted. Its subcellular location is the golgi apparatus. The protein localises to the cytoplasm. Its function is as follows. Lectin that binds to various sugars: galactose &gt; mannose = fucose &gt; N-acetylglucosamine &gt; N-acetylgalactosamine. Acts as a chemoattractant, probably involved in the regulation of cell migration. The protein is Collectin-10 (Colec10) of Mus musculus (Mouse).